We begin with the raw amino-acid sequence, 649 residues long: 1-deoxy-D-xylulose-5-phosphate synthase (649 aa).

Thiamine diphosphate is bound by residues histidine 74 and 115-117 (GHA). A Mg(2+)-binding site is contributed by aspartate 146. Thiamine diphosphate is bound by residues 147–148 (GA), asparagine 176, tyrosine 292, and glutamate 375. Asparagine 176 serves as a coordination point for Mg(2+).

It belongs to the transketolase family. DXPS subfamily. As to quaternary structure, homodimer. Mg(2+) serves as cofactor. The cofactor is thiamine diphosphate.

It carries out the reaction D-glyceraldehyde 3-phosphate + pyruvate + H(+) = 1-deoxy-D-xylulose 5-phosphate + CO2. Its pathway is metabolic intermediate biosynthesis; 1-deoxy-D-xylulose 5-phosphate biosynthesis; 1-deoxy-D-xylulose 5-phosphate from D-glyceraldehyde 3-phosphate and pyruvate: step 1/1. Functionally, catalyzes the acyloin condensation reaction between C atoms 2 and 3 of pyruvate and glyceraldehyde 3-phosphate to yield 1-deoxy-D-xylulose-5-phosphate (DXP). The protein is 1-deoxy-D-xylulose-5-phosphate synthase of Synechococcus sp. (strain JA-3-3Ab) (Cyanobacteria bacterium Yellowstone A-Prime).